Reading from the N-terminus, the 484-residue chain is MAMLLRVATQRLSPWRSFCSRGSQGGLSQDFVEALKAVVGSPHVSTASAVREQHGHDESMHRCQPPDAVVWPQNVDQVSRVASLCYNQGVPIIPFGTGTGVEGGVCAVQGGVCINLTHMDQITELNTEDFSVVVEPGVTRKALNTHLRDSGLWFPVDPGADASLCGMAATGASGTNAVRYGTMRDNVINLEVVLPDGRLLHTAGRGRHYRKSAAGYNLTGLFVGSEGTLGIITSTTLRLHPAPEATVAATCAFPSVQAAVDSTVQILQAAVPVARIEFLDDVMMDACNRHSKLNCPVAPTLFLEFHGSQQTLAEQLQRTEAITQDNGGSHFSWAKEAEKRNELWAARHNAWYAALALSPGSKAYSTDVCVPISRLPEILVETKEEIKASKLTGAIVGHVGDGNFHCILLVDPDDAEEQRRVKAFAENLGRRALALGGTCTGEHGIGLGKRQLLQEEVGPVGVETMRQLKNTLDPRGLMNPGKVL.

A mitochondrion-targeting transit peptide spans 1-52 (MAMLLRVATQRLSPWRSFCSRGSQGGLSQDFVEALKAVVGSPHVSTASAVRE). An N6-acetyllysine modification is found at K36. The 181-residue stretch at 62 to 242 (RCQPPDAVVW…TSTTLRLHPA (181 aa)) folds into the FAD-binding PCMH-type domain. K292 bears the N6-acetyllysine mark. Position 335 is an N6-acetyllysine; alternate (K335). Residue K335 is modified to N6-succinyllysine; alternate. An N6-acetyllysine mark is found at K422 and K449.

It belongs to the FAD-binding oxidoreductase/transferase type 4 family. Interacts with CSRP3. Requires FAD as cofactor. In terms of tissue distribution, readily detected in liver and kidney, with a weaker signal observed in heart, skeletal muscle, stomach, brain, and lung.

It localises to the mitochondrion. The enzyme catalyses (R)-lactate + 2 Fe(III)-[cytochrome c] = 2 Fe(II)-[cytochrome c] + pyruvate + 2 H(+). Functionally, involved in D-lactate, but not L-lactate catabolic process. The protein is Probable D-lactate dehydrogenase, mitochondrial of Mus musculus (Mouse).